The chain runs to 505 residues: Glutamate--tRNA ligase (505 aa).

The 'HIGH' region motif lies at 16–26; the sequence is PSPTGFPHVGT. The 'KMSKS' region motif lies at 257–261; the sequence is KLSKR. Lysine 260 is an ATP binding site.

The protein belongs to the class-I aminoacyl-tRNA synthetase family. Glutamate--tRNA ligase type 1 subfamily. Monomer.

The protein localises to the cytoplasm. It carries out the reaction tRNA(Glu) + L-glutamate + ATP = L-glutamyl-tRNA(Glu) + AMP + diphosphate. In terms of biological role, catalyzes the attachment of glutamate to tRNA(Glu) in a two-step reaction: glutamate is first activated by ATP to form Glu-AMP and then transferred to the acceptor end of tRNA(Glu). This chain is Glutamate--tRNA ligase, found in Psychrobacter sp. (strain PRwf-1).